Consider the following 2025-residue polypeptide: MDNFAEGDFTVADYALLEDCPHVDDCVFAAEFMSNDYVRVTQLYCDGVGVQYKDYIQSERNLEFDICSIWCSKPISVLQDYCDAIKINIFWPLLFQHQNSSVISRLHPCVDANNSRASEINLKKLQHLELMEDIVDLAKKVANDSFLIGGLLRIGCKIENKILAMEEALNWIKYAGDVTILTKLGSIDNCWPMLSIFFTEYKYHITKIVMEDCNLLEELKTQSCMDCIEEGELMKMKGNEEFSKERFDIAIIYYTRAIEYRPENYLLYGNRALCFLRTGQFRNALGDGKRATILKNTWPKGHYRYCDALSMLGEYDWALQANIKAQKLCKNDPEGIKDLIQQHVKLQKQIEDLQGRTANKDPIKAFYENRAYTPRSLSAPIFTTSLNFVEKERDFRKINHEMANGGNQNLKVADEALKVDDCDCHPEFSPPSSQPPKHKGKQKSRNNESEKFSSSSPLTLPADLKNILEKQFSKSSRAAHQDFANIMKMLRSLIQDGYMALLEQRCRSAAQAFTELLNGLDPQKIKQLNLAMINYVLVVYGLAISLLGIGQPEELSEAENQFKRIIEHYPSEGLDCLAYCGIGKVYLKKNRFLEALNHFEKARTLIYRLPGVLTWPTSNVIIEESQPQKIKMLLEKFVEECKFPPVPDAICCYQKCHGYSKIQIYITDPDFKGFIRISCCQYCKIEFHMNCWKKLKTTTFNDKIDKDFLQGICLTPDCEGVISKIIIFSSGGEVKCEFEHKVIKEKVPPRPILKQKCSSLEKLRLKEDKKLKRKIQKKEAKKLAQERMEEDLRESNPPKNEEQKETVDNVQRCQFLDDRILQCIKQYADKIKSGIQNTAMLLKELLSWKVLSTEDYTTCFSSRNFLNEAVDYVIRHLIQENNRVKTRIFLHVLSELKEVEPKLAAWIQKLNSFGLDATGTFFSRYGASLKLLDFSIMTFLWNEKYGHKLDSIEGKQLDYFSEPASLKEARCLIWLLEEHRDKFPALHSALDEFFDIMDSRCTVLRKQDSGEAPFSSTKVKNKSKKKKPKDSKPMLVGSGTTSVTSNNEIITSSEDHSNRNSDSAGPFAVPDHLRQDVEEFEALYDQHSNEYVVRNKKLWDMNPKQKCSTLYDYFSQFLEEHGPLDMSNKMFSAEYEFFPEETRQILEKAGGLKPFLLGCPRFVVIDNCIALKKVASRLKKKRKKKNIKTKVEEISKAGEYVRVKLQLNPAAREFKPDVKSKPVSDSSSAPAFENVKPKPVSANSPKPACEDVKAKPVSDNSSRQVSEDGQPKGVSSNSPKPGSEDANYKRVSCNSPKPVLEDVKPTYWAQSHLVTGYCTYLPFQRFDITQTPPAYINVLPGLPQYTSIYTPLASLSPEYQLPRSVPVVPSFVANDRADKNAAAYFEGHHLNAENVAGHQIASETQILEGSLGISVKSHCSTGDAHTVLSESNRNDEHCGNSNNKCEVIPESTSAVTNIPHVQMVAIQVSWNIIHQEVNTEPYNPFEERQGEISRIEKEHQVLQDQLQEVYENYEQIKLKGLEETRDLEEKLKRHLEENKISKTELDWFLQDLEREIKKWQQEKKEIQERLKSLKKKIKKVSNASEMYTQKNDGKEKEHELHLDQSLEISNTLTNEKMKIEEYIKKGKEDYEESHQRAVAAEVSVLENWKESEVYKLQIMESQAEAFLKKLGLISRDPAAYPDMESDIRSWELFLSNVTKEIEKAKSQFEEQIKAIKNGSRLSELSKVQISELSFPACNTVHPELLPESSGDDGQGLVTSASDVTGNHAALHRDPSVFSAGDSPGEAPSALLPGPPPGQPEATQLTGPKRAGQAALSERSPVADRKQPVPPGRAARSSQSPKKPFNSIIEHLSVVFPCYNSTELAGFIKKVRSKNKNSLSGLSIDEIVQRVTEHILDEQKKKKPNPGKDKRTYEPSSATPVTRSSQGSPSVVVAPSPKTKGQKAEDVPVRIALGASSCEICHEVFKSKNVRVLKCGHKYHKGCFKQWLKGQSACPACQGRDLLTEESPSGRGWPSQNQELPSCSSR.

An interaction with POLG region spans residues 1–230 (MDNFAEGDFT…TQSCMDCIEE (230 aa)). 2 TPR repeats span residues 231–264 (GELM…RPEN) and 266–298 (LLYG…KNTW). Phosphoserine; by PKB/AKT2 is present on Ser-378. Residues 423-458 (DCHPEFSPPSSQPPKHKGKQKSRNNESEKFSSSSPL) are disordered. TPR repeat units follow at residues 536 to 572 (VLVV…YPSE) and 576 to 609 (CLAY…IYRL). Residues 786 to 805 (ERMEEDLRESNPPKNEEQKE) form a disordered region. Residues 793–805 (RESNPPKNEEQKE) show a composition bias toward basic and acidic residues. A Phosphoserine modification is found at Ser-1009. 4 disordered regions span residues 1012–1068 (APFS…GPFA), 1215–1295 (KPDV…SCNS), 1773–1842 (DPSV…SPKK), and 1894–1944 (ILDE…QKAE). The span at 1019 to 1029 (VKNKSKKKKPK) shows a compositional bias: basic residues. Residues 1038–1052 (SGTTSVTSNNEIITS) show a composition bias toward polar residues. The residue at position 1061 (Ser-1061) is a Phosphoserine. The span at 1894-1912 (ILDEQKKKKPNPGKDKRTY) shows a compositional bias: basic and acidic residues. The span at 1913 to 1928 (EPSSATPVTRSSQGSP) shows a compositional bias: polar residues. The RING-type zinc-finger motif lies at 1957–1997 (CEICHEVFKSKNVRVLKCGHKYHKGCFKQWLKGQSACPACQ). The disordered stretch occupies residues 2004–2025 (EESPSGRGWPSQNQELPSCSSR). Over residues 2013–2025 (PSQNQELPSCSSR) the composition is skewed to polar residues.

As to quaternary structure, interacts (when phosphorylated on Ser-378) with AKT1, AKT2 and AKT3 (when phosphorylated). Interacts with CIT. Interacts with POLG. Interacts with HSP70. Interacts with SMURF2. Post-translationally, phosphorylation on Ser-378 by Akt is required for ubiquitin ligase activity. Proteolytically cleaved into differently sized N- and C-terminal fragments. Found in all tissues examined.

The protein resides in the nucleus. It localises to the cytoplasm. The protein localises to the golgi apparatus. The catalysed reaction is S-ubiquitinyl-[E2 ubiquitin-conjugating enzyme]-L-cysteine + [acceptor protein]-L-lysine = [E2 ubiquitin-conjugating enzyme]-L-cysteine + N(6)-ubiquitinyl-[acceptor protein]-L-lysine.. It participates in protein modification; protein ubiquitination. E3 ubiquitin-protein ligase which catalyzes the formation of 'Lys-48'-polyubiquitin chains. Mediates the ubiquitination and subsequent degradation of phosphorylated Akt (AKT1, AKT2 and AKT3) in the nucleus. Acts as a terminal regulator of Akt signaling after activation; its phosphorylation by Akt, which is a prerequisite for ubiquitin ligase activity, suggests the existence of a regulation mechanism required to control Akt levels after activation. Positively regulates TGFB1-induced epithelial-mesenchymal transition and myofibroblast differentiation by mediating the ubiquitination and subsequent degradation of SMURF2. Regulates neuronal differentiation by regulating actin remodeling and Golgi organization via a signaling cascade involving RHOA, CIT and ROCK. Inhibits cell proliferation. The chain is E3 ubiquitin-protein ligase TTC3 (TTC3) from Homo sapiens (Human).